The following is a 406-amino-acid chain: Vacuole membrane protein 1 (406 aa).

Over residues 1-20 (MAENGKNCDQRRVAMNKEQH) the composition is skewed to basic and acidic residues. The segment at 1–36 (MAENGKNCDQRRVAMNKEQHNGNFTDPSSVNEKKRR) is disordered. Ala-2 carries the post-translational modification N-acetylalanine. Over 2–43 (AENGKNCDQRRVAMNKEQHNGNFTDPSSVNEKKRREREERQN) the chain is Cytoplasmic. The span at 21 to 30 (NGNFTDPSSV) shows a compositional bias: polar residues. The helical transmembrane segment at 44-64 (IVLWRQPLITLQYFSLEILVI) threads the bilayer. Over 65 to 77 (LKEWTSKLWHRQS) the chain is Extracellular. A helical membrane pass occupies residues 78–98 (IVVSFLLLLAVLIATYYVEGA). Residues 99–109 (HQQYVQRIEKQ) lie on the Cytoplasmic side of the membrane. The helical transmembrane segment at 110–130 (FLLYAYWIGLGILSSVGLGTG) threads the bilayer. Topologically, residues 131–250 (LHTFLLYLGP…ASRAKLAVQK (120 aa)) are extracellular. Residues 173-316 (GTEGTISLWS…FVIITFSKHI (144 aa)) form a VTT domain region. The helical transmembrane segment at 251 to 271 (LVQKVGFFGILACASIPNPLF) threads the bilayer. Residues 272 to 273 (DL) lie on the Cytoplasmic side of the membrane. Residues 274–294 (AGITCGHFLVPFWTFFGATLI) form a helical membrane-spanning segment. The Extracellular segment spans residues 295–305 (GKAIIKMHIQK). A helical membrane pass occupies residues 306–326 (IFVIITFSKHIVEQMVAFIGA). Topologically, residues 327–363 (VPGIGPSLQKPFQEYLEAQRQKLHHKSEMGTPQGENW) are cytoplasmic. The chain crosses the membrane as a helical span at residues 364–384 (LSWMFEKLVVVMVCYFILSII). Residues 385 to 406 (NSMAQSYAKRIQQRLNSEEKTK) are Extracellular-facing.

This sequence belongs to the VMP1 family. Interacts with BECN1. Interacts with TJP1. Interacts with TP53INP2. Interacts with TMEM41B. Interacts with ATP2A2, PLN and SLN; competes with PLN and SLN to prevent them from forming an inhibitory complex with ATP2A2. Interacts with ATG2A.

The protein resides in the endoplasmic reticulum-Golgi intermediate compartment membrane. The protein localises to the cell membrane. It is found in the vacuole membrane. It localises to the endoplasmic reticulum membrane. It catalyses the reaction a 1,2-diacyl-sn-glycero-3-phospho-L-serine(in) = a 1,2-diacyl-sn-glycero-3-phospho-L-serine(out). It carries out the reaction cholesterol(in) = cholesterol(out). The catalysed reaction is a 1,2-diacyl-sn-glycero-3-phosphocholine(in) = a 1,2-diacyl-sn-glycero-3-phosphocholine(out). The enzyme catalyses a 1,2-diacyl-sn-glycero-3-phosphoethanolamine(in) = a 1,2-diacyl-sn-glycero-3-phosphoethanolamine(out). Phospholipid scramblase involved in lipid homeostasis and membrane dynamics processes. Has phospholipid scramblase activity toward cholesterol and phosphatidylserine, as well as phosphatidylethanolamine and phosphatidylcholine. Required for autophagosome formation: participates in early stages of autophagosome biogenesis at the endoplasmic reticulum (ER) membrane by reequilibrating the leaflets of the ER as lipids are extracted by ATG2 (ATG2A or ATG2B) to mediate autophagosome assembly. Regulates ATP2A2 activity to control ER-isolation membrane contacts for autophagosome formation. In addition to autophagy, involved in other processes in which phospholipid scramblase activity is required. Modulates ER contacts with lipid droplets, mitochondria and endosomes. Plays an essential role in formation of cell junctions. Upon stress such as bacterial and viral infection, promotes formation of cytoplasmic vacuoles followed by cell death. Involved in the cytoplasmic vacuolization of acinar cells during the early stage of acute pancreatitis. The protein is Vacuole membrane protein 1 of Pongo abelii (Sumatran orangutan).